Here is a 443-residue protein sequence, read N- to C-terminus: Pyrrolysine--tRNA ligase (443 aa).

The tract at residues 103–177 (VRKAMPKSVA…PAAPVPTSAP (75 aa)) is disordered. Residues 131–177 (PAPATPVSAPAQAPAPSTGSASATSASAQRMANSAAAPAAPVPTSAP) are compositionally biased toward low complexity.

Belongs to the class-II aminoacyl-tRNA synthetase family.

The protein resides in the cytoplasm. The enzyme catalyses tRNA(Pyl) + L-pyrrolysine + ATP = L-pyrrolysyl-tRNA(Pyl) + AMP + diphosphate. Its function is as follows. Catalyzes the attachment of pyrrolysine to tRNA(Pyl). Pyrrolysine is a lysine derivative encoded by the termination codon UAG. This is Pyrrolysine--tRNA ligase from Methanosarcina acetivorans (strain ATCC 35395 / DSM 2834 / JCM 12185 / C2A).